A 99-amino-acid chain; its full sequence is MSPDNYLYLSALLFTIGAAGVLLRRNAIVMFMCIELMLNAANLAFVTFSRIHGHLDGQVVAFFTMVVAACEVVIGLAIITMIFRTRRSASVDAANLLKH.

3 helical membrane passes run 3–23, 28–48, and 59–79; these read PDNY…GVLL, IVMF…FVTF, and VVAF…LAII.

The protein belongs to the complex I subunit 4L family. NDH-1 is composed of 14 different subunits. Subunits NuoA, H, J, K, L, M, N constitute the membrane sector of the complex.

It localises to the cell membrane. It carries out the reaction a quinone + NADH + 5 H(+)(in) = a quinol + NAD(+) + 4 H(+)(out). In terms of biological role, NDH-1 shuttles electrons from NADH, via FMN and iron-sulfur (Fe-S) centers, to quinones in the respiratory chain. The immediate electron acceptor for the enzyme in this species is believed to be a menaquinone. Couples the redox reaction to proton translocation (for every two electrons transferred, four hydrogen ions are translocated across the cytoplasmic membrane), and thus conserves the redox energy in a proton gradient. This Mycolicibacterium vanbaalenii (strain DSM 7251 / JCM 13017 / BCRC 16820 / KCTC 9966 / NRRL B-24157 / PYR-1) (Mycobacterium vanbaalenii) protein is NADH-quinone oxidoreductase subunit K.